The primary structure comprises 235 residues: AA9 family lytic polysaccharide monooxygenase D (235 aa).

The signal sequence occupies residues 1–18; the sequence is MKAFFAVLAVVSAPFVLG. His-19 serves as a coordination point for Cu(2+). The O-linked (Man...) serine glycan is linked to Ser-29. Cys-61 and Cys-181 are disulfide-bonded. Cu(2+) is bound at residue His-94. His-167 and Gln-176 together coordinate O2. Tyr-178 is a binding site for Cu(2+). An N-linked (GlcNAc...) asparagine glycan is attached at Asn-221.

It belongs to the polysaccharide monooxygenase AA9 family. Cu(2+) serves as cofactor.

The protein localises to the secreted. It carries out the reaction [(1-&gt;4)-beta-D-glucosyl]n+m + reduced acceptor + O2 = 4-dehydro-beta-D-glucosyl-[(1-&gt;4)-beta-D-glucosyl]n-1 + [(1-&gt;4)-beta-D-glucosyl]m + acceptor + H2O.. In terms of biological role, lytic polysaccharide monooxygenase (LPMO) that depolymerizes crystalline and amorphous polysaccharides via the oxidation of scissile alpha- or beta-(1-4)-glycosidic bonds, yielding only C1 oxidation products. Catalysis by LPMOs requires the reduction of the active-site copper from Cu(II) to Cu(I) by a reducing agent and H(2)O(2) or O(2) as a cosubstrate. The chain is AA9 family lytic polysaccharide monooxygenase D from Phanerodontia chrysosporium (White-rot fungus).